Here is a 450-residue protein sequence, read N- to C-terminus: UDP-N-acetylmuramoylalanine--D-glutamate ligase (450 aa).

Residue 119-125 (GSNGKTT) participates in ATP binding.

It belongs to the MurCDEF family.

Its subcellular location is the cytoplasm. It catalyses the reaction UDP-N-acetyl-alpha-D-muramoyl-L-alanine + D-glutamate + ATP = UDP-N-acetyl-alpha-D-muramoyl-L-alanyl-D-glutamate + ADP + phosphate + H(+). It participates in cell wall biogenesis; peptidoglycan biosynthesis. Cell wall formation. Catalyzes the addition of glutamate to the nucleotide precursor UDP-N-acetylmuramoyl-L-alanine (UMA). The chain is UDP-N-acetylmuramoylalanine--D-glutamate ligase from Bacillus mycoides (strain KBAB4) (Bacillus weihenstephanensis).